Reading from the N-terminus, the 113-residue chain is Hydrogenase maturation factor HypA (113 aa).

His-2 is a Ni(2+) binding site. 4 residues coordinate Zn(2+): Cys-73, Cys-76, Cys-89, and Cys-92.

The protein belongs to the HypA/HybF family.

Functionally, involved in the maturation of [NiFe] hydrogenases. Required for nickel insertion into the metal center of the hydrogenase. In Cereibacter sphaeroides (Rhodobacter sphaeroides), this protein is Hydrogenase maturation factor HypA.